Consider the following 184-residue polypeptide: Photosystem I assembly protein Ycf4 (184 aa).

2 consecutive transmembrane segments (helical) span residues 19-39 and 57-77; these read ISNF…LLVG and IVFF…LFIS.

Belongs to the Ycf4 family.

It localises to the plastid. The protein localises to the chloroplast thylakoid membrane. In terms of biological role, seems to be required for the assembly of the photosystem I complex. This chain is Photosystem I assembly protein Ycf4, found in Atropa belladonna (Belladonna).